The sequence spans 516 residues: Homeobox protein 6 (516 aa).

Low complexity predominate over residues 22-31 (NYDFDNKNNS). Disordered stretches follow at residues 22–140 (NYDF…PNCN), 200–256 (SLNN…SSPS), and 268–348 (DEND…NNGD). A compositionally biased stretch (gly residues) spans 32-41 (IGGGGGGGGS). 3 stretches are compositionally biased toward low complexity: residues 42 to 59 (SSSRSSSSRSSSNRSSSG), 66 to 78 (SNSSSSINNIINS), and 101 to 132 (TTTTTTTTTTTTTTTTTKNENISSSESENSSS). The segment covering 284–346 (NNNNNNNNNN…NNNNTNTNNN (63 aa)) has biased composition (low complexity). 2 DNA-binding regions (homeobox) span residues 362-421 (KSGQ…SKSG) and 424-483 (SYAK…NKLS). Positions 483 to 516 (SSKAIQDKDNQDNDNNNSNNNENNDDSYSDEGLF) are disordered. The segment covering 495 to 504 (NDNNNSNNNE) has biased composition (low complexity). A compositionally biased stretch (acidic residues) spans 505-516 (NNDDSYSDEGLF).

The protein localises to the nucleus. Functionally, putative transcription factor. This chain is Homeobox protein 6 (hbx6), found in Dictyostelium discoideum (Social amoeba).